Reading from the N-terminus, the 40-residue chain is Ferredoxin-2 (40 aa).

One can recognise a 2Fe-2S ferredoxin-type domain in the interval tyrosine 3 to arginine 40. Cysteine 39 lines the [2Fe-2S] cluster pocket.

This sequence belongs to the 2Fe2S plant-type ferredoxin family. [2Fe-2S] cluster serves as cofactor.

The protein resides in the plastid. It localises to the chloroplast. Its function is as follows. Ferredoxins are iron-sulfur proteins that transfer electrons in a wide variety of metabolic reactions. This is Ferredoxin-2 from Pisum sativum (Garden pea).